Here is a 319-residue protein sequence, read N- to C-terminus: ATP-dependent 6-phosphofructokinase (319 aa).

An ATP-binding site is contributed by glycine 11. 21 to 25 (RAVVR) contributes to the ADP binding site. ATP contacts are provided by residues 72–73 (RC) and 102–105 (GDGS). Position 103 (aspartate 103) interacts with Mg(2+). Substrate is bound at residue 125-127 (TID). Aspartate 127 functions as the Proton acceptor in the catalytic mechanism. Arginine 154 lines the ADP pocket. Substrate-binding positions include arginine 162 and 169–171 (MGR). Residues 185-187 (GAE), arginine 211, and 213-215 (KKH) each bind ADP. Residues glutamate 222, arginine 243, and 249–252 (HIQR) each bind substrate.

It belongs to the phosphofructokinase type A (PFKA) family. ATP-dependent PFK group I subfamily. Prokaryotic clade 'B1' sub-subfamily. In terms of assembly, homotetramer. Mg(2+) serves as cofactor.

The protein resides in the cytoplasm. The catalysed reaction is beta-D-fructose 6-phosphate + ATP = beta-D-fructose 1,6-bisphosphate + ADP + H(+). It participates in carbohydrate degradation; glycolysis; D-glyceraldehyde 3-phosphate and glycerone phosphate from D-glucose: step 3/4. With respect to regulation, allosterically activated by ADP and other diphosphonucleosides, and allosterically inhibited by phosphoenolpyruvate. In terms of biological role, catalyzes the phosphorylation of D-fructose 6-phosphate to fructose 1,6-bisphosphate by ATP, the first committing step of glycolysis. The chain is ATP-dependent 6-phosphofructokinase from Bacillus pumilus (strain SAFR-032).